Here is a 170-residue protein sequence, read N- to C-terminus: Shikimate kinase (170 aa).

Residue 11–16 (LSGKST) participates in ATP binding. Ser-15 is a binding site for Mg(2+). The substrate site is built by Asp-33, Arg-57, and Gly-79. ATP is bound at residue Arg-119. Position 137 (Arg-137) interacts with substrate.

The protein belongs to the shikimate kinase family. Monomer. Requires Mg(2+) as cofactor.

It localises to the cytoplasm. It catalyses the reaction shikimate + ATP = 3-phosphoshikimate + ADP + H(+). It functions in the pathway metabolic intermediate biosynthesis; chorismate biosynthesis; chorismate from D-erythrose 4-phosphate and phosphoenolpyruvate: step 5/7. Catalyzes the specific phosphorylation of the 3-hydroxyl group of shikimic acid using ATP as a cosubstrate. In Clostridium botulinum (strain Loch Maree / Type A3), this protein is Shikimate kinase.